A 1644-amino-acid chain; its full sequence is Kinesin-like protein unc-104 (1644 aa).

One can recognise a Kinesin motor domain in the interval 3–351 (SVKVAVRVRP…LRYADRAKQI (349 aa)). Residue 97–104 (GQTGAGKS) coordinates ATP. Residues 358 to 436 (NEDANAKLIR…IAELNETWEE (79 aa)) adopt a coiled-coil conformation. The FHA domain occupies 499 to 565 (TRLGTSEANV…LQTGSRVILG (67 aa)). Basic and acidic residues predominate over residues 574 to 591 (HPEQAREKREKPKDKDVG). Residues 574 to 598 (HPEQAREKREKPKDKDVGENPGGNA) are disordered. A coiled-coil region spans residues 631-672 (EQFKREKLAADQEFEEQRKTYEARIDALQKQVEEQSMTMSMY). Disordered regions lie at residues 953–985 (EQEDADSGRGDSSVASELHESNEHEPGEHLQPG) and 1419–1440 (HMVIPPSPQTPVKDQQTPTLPE). The span at 969 to 984 (ELHESNEHEPGEHLQP) shows a compositional bias: basic and acidic residues. Polar residues predominate over residues 1428–1437 (TPVKDQQTPT). The PH domain occupies 1542 to 1640 (VVARKGYLNV…WLYAINPLLA (99 aa)).

It belongs to the TRAFAC class myosin-kinesin ATPase superfamily. Kinesin family. Unc-104 subfamily. In terms of assembly, monomer.

It localises to the cytoplasm. It is found in the cytoskeleton. In terms of biological role, required for presynaptic maturation, has a role in axonal transport of dense-core vesicles carrying synaptic vesicle precursors, components required for the morphological transformation of axonal growth cones to mature boutons. The protein is Kinesin-like protein unc-104 of Aedes aegypti (Yellowfever mosquito).